The sequence spans 292 residues: Acetylglutamate kinase (292 aa).

Substrate contacts are provided by residues 64-65, R86, and N190; that span reads GG.

It belongs to the acetylglutamate kinase family. ArgB subfamily.

It is found in the cytoplasm. The catalysed reaction is N-acetyl-L-glutamate + ATP = N-acetyl-L-glutamyl 5-phosphate + ADP. It participates in amino-acid biosynthesis; L-arginine biosynthesis; N(2)-acetyl-L-ornithine from L-glutamate: step 2/4. Its function is as follows. Catalyzes the ATP-dependent phosphorylation of N-acetyl-L-glutamate. The protein is Acetylglutamate kinase of Geobacter metallireducens (strain ATCC 53774 / DSM 7210 / GS-15).